Here is a 405-residue protein sequence, read N- to C-terminus: Phosphoglycerate kinase (405 aa).

Substrate-binding positions include 21–23 (DFN), Arg36, 59–62 (HLGR), Arg119, and Arg161. ATP is bound by residues Lys212, Gly301, Glu332, and 361 to 364 (GGDS).

The protein belongs to the phosphoglycerate kinase family. In terms of assembly, monomer.

Its subcellular location is the cytoplasm. It catalyses the reaction (2R)-3-phosphoglycerate + ATP = (2R)-3-phospho-glyceroyl phosphate + ADP. The protein operates within carbohydrate degradation; glycolysis; pyruvate from D-glyceraldehyde 3-phosphate: step 2/5. This is Phosphoglycerate kinase from Leuconostoc mesenteroides subsp. mesenteroides (strain ATCC 8293 / DSM 20343 / BCRC 11652 / CCM 1803 / JCM 6124 / NCDO 523 / NBRC 100496 / NCIMB 8023 / NCTC 12954 / NRRL B-1118 / 37Y).